The primary structure comprises 238 residues: Putative csd-like protein HI_1343 (238 aa).

N6-(pyridoxal phosphate)lysine is present on Lys-146.

Belongs to the class-V pyridoxal-phosphate-dependent aminotransferase family. Csd subfamily.

This Haemophilus influenzae (strain ATCC 51907 / DSM 11121 / KW20 / Rd) protein is Putative csd-like protein HI_1343.